A 496-amino-acid polypeptide reads, in one-letter code: Aspartyl/glutamyl-tRNA(Asn/Gln) amidotransferase subunit B (496 aa).

The tract at residues 475–496 (TGGSADPSKVNTLLREQLEDKK) is disordered.

The protein belongs to the GatB/GatE family. GatB subfamily. In terms of assembly, heterotrimer of A, B and C subunits.

The catalysed reaction is L-glutamyl-tRNA(Gln) + L-glutamine + ATP + H2O = L-glutaminyl-tRNA(Gln) + L-glutamate + ADP + phosphate + H(+). It catalyses the reaction L-aspartyl-tRNA(Asn) + L-glutamine + ATP + H2O = L-asparaginyl-tRNA(Asn) + L-glutamate + ADP + phosphate + 2 H(+). Functionally, allows the formation of correctly charged Asn-tRNA(Asn) or Gln-tRNA(Gln) through the transamidation of misacylated Asp-tRNA(Asn) or Glu-tRNA(Gln) in organisms which lack either or both of asparaginyl-tRNA or glutaminyl-tRNA synthetases. The reaction takes place in the presence of glutamine and ATP through an activated phospho-Asp-tRNA(Asn) or phospho-Glu-tRNA(Gln). The protein is Aspartyl/glutamyl-tRNA(Asn/Gln) amidotransferase subunit B of Haloquadratum walsbyi (strain DSM 16790 / HBSQ001).